We begin with the raw amino-acid sequence, 408 residues long: Peptidase T (408 aa).

Residue histidine 78 coordinates Zn(2+). The active site involves aspartate 80. Residue aspartate 140 participates in Zn(2+) binding. The Proton acceptor role is filled by glutamate 173. Zn(2+) contacts are provided by glutamate 174, aspartate 196, and histidine 379.

Belongs to the peptidase M20B family. Zn(2+) serves as cofactor.

Its subcellular location is the cytoplasm. The enzyme catalyses Release of the N-terminal residue from a tripeptide.. Its function is as follows. Cleaves the N-terminal amino acid of tripeptides. This is Peptidase T from Escherichia coli (strain UTI89 / UPEC).